Reading from the N-terminus, the 332-residue chain is Phosphatidylglycerol--prolipoprotein diacylglyceryl transferase (332 aa).

3 consecutive transmembrane segments (helical) span residues 18-38, 66-86, and 111-131; these read FPYF…AYIL, FFTW…TMVY, and VGLR…GGGL. Residue Arg-159 participates in a 1,2-diacyl-sn-glycero-3-phospho-(1'-sn-glycerol) binding. The next 2 membrane-spanning stretches (helical) occupy residues 249-269 and 302-322; these read GFLV…IEYF and ILCV…SAYH.

This sequence belongs to the Lgt family.

The protein resides in the cell inner membrane. It carries out the reaction L-cysteinyl-[prolipoprotein] + a 1,2-diacyl-sn-glycero-3-phospho-(1'-sn-glycerol) = an S-1,2-diacyl-sn-glyceryl-L-cysteinyl-[prolipoprotein] + sn-glycerol 1-phosphate + H(+). It participates in protein modification; lipoprotein biosynthesis (diacylglyceryl transfer). Functionally, catalyzes the transfer of the diacylglyceryl group from phosphatidylglycerol to the sulfhydryl group of the N-terminal cysteine of a prolipoprotein, the first step in the formation of mature lipoproteins. This chain is Phosphatidylglycerol--prolipoprotein diacylglyceryl transferase, found in Treponema pallidum (strain Nichols).